A 194-amino-acid polypeptide reads, in one-letter code: RNA polymerase II subunit A C-terminal domain phosphatase SSU72 like protein 1 (194 aa).

The protein belongs to the SSU72 phosphatase family.

The protein localises to the nucleus. It catalyses the reaction O-phospho-L-seryl-[protein] + H2O = L-seryl-[protein] + phosphate. The catalysed reaction is O-phospho-L-threonyl-[protein] + H2O = L-threonyl-[protein] + phosphate. Functionally, protein phosphatase that catalyzes the dephosphorylation of the C-terminal domain of RNA polymerase II. Plays a role in RNA processing and termination. The sequence is that of RNA polymerase II subunit A C-terminal domain phosphatase SSU72 like protein 1 from Homo sapiens (Human).